Here is a 328-residue protein sequence, read N- to C-terminus: RNA-binding motif protein, X-linked 2 (328 aa).

Lys8 participates in a covalent cross-link: Glycyl lysine isopeptide (Lys-Gly) (interchain with G-Cter in SUMO2). The RRM domain occupies 36–114; that stretch reads AWIFLGGLPY…RTIRVDHVAN (79 aa). Positions 118–328 are disordered; the sequence is PQESEDVDDV…SFHASDRRHY (211 aa). Thr140 bears the Phosphothreonine mark. Residue Ser149 is modified to Phosphoserine. The segment covering 157–172 has biased composition (basic residues); that stretch reads TKKPKKDKKEKKKKKE. Basic and acidic residues-rich tracts occupy residues 192–219, 236–247, and 255–273; these read TVKE…ECRE, GRAEEPEWEAKK, and KPSS…DRGR. Lys246 participates in a covalent cross-link: Glycyl lysine isopeptide (Lys-Gly) (interchain with G-Cter in SUMO2). Position 274 is a phosphoserine (Ser274). Basic residues predominate over residues 291-314; sequence HRSRSRSRSRSPDRSHRHKKHRYS. Over residues 315 to 328 the composition is skewed to basic and acidic residues; that stretch reads HERESFHASDRRHY.

It belongs to the IST3 family. As to quaternary structure, part of the activated spliceosome B/catalytic step 1 spliceosome, one of the forms of the spliceosome which has a well-formed active site but still cannot catalyze the branching reaction and is composed of at least 52 proteins, the U2, U5 and U6 snRNAs and the pre-mRNA. Component of the minor spliceosome, which splices U12-type introns.

The protein resides in the nucleus. In terms of biological role, involved in pre-mRNA splicing as component of the activated spliceosome. As a component of the minor spliceosome, involved in the splicing of U12-type introns in pre-mRNAs. This chain is RNA-binding motif protein, X-linked 2 (Rbmx2), found in Rattus norvegicus (Rat).